The following is a 283-amino-acid chain: Elongation factor Ts (283 aa).

Residues 79-82 (TDFV) form an involved in Mg(2+) ion dislocation from EF-Tu region.

This sequence belongs to the EF-Ts family.

Its subcellular location is the cytoplasm. Associates with the EF-Tu.GDP complex and induces the exchange of GDP to GTP. It remains bound to the aminoacyl-tRNA.EF-Tu.GTP complex up to the GTP hydrolysis stage on the ribosome. This chain is Elongation factor Ts, found in Shewanella baltica (strain OS155 / ATCC BAA-1091).